Here is a 165-residue protein sequence, read N- to C-terminus: Large ribosomal subunit protein uL10 (165 aa).

It belongs to the universal ribosomal protein uL10 family. In terms of assembly, part of the ribosomal stalk of the 50S ribosomal subunit. The N-terminus interacts with L11 and the large rRNA to form the base of the stalk. The C-terminus forms an elongated spine to which L12 dimers bind in a sequential fashion forming a multimeric L10(L12)X complex.

Its function is as follows. Forms part of the ribosomal stalk, playing a central role in the interaction of the ribosome with GTP-bound translation factors. This chain is Large ribosomal subunit protein uL10, found in Borrelia turicatae (strain 91E135).